Consider the following 363-residue polypeptide: Cobalt-precorrin-5B C(1)-methyltransferase (363 aa).

It belongs to the CbiD family.

It carries out the reaction Co-precorrin-5B + S-adenosyl-L-methionine = Co-precorrin-6A + S-adenosyl-L-homocysteine. It participates in cofactor biosynthesis; adenosylcobalamin biosynthesis; cob(II)yrinate a,c-diamide from sirohydrochlorin (anaerobic route): step 6/10. In terms of biological role, catalyzes the methylation of C-1 in cobalt-precorrin-5B to form cobalt-precorrin-6A. This Treponema denticola (strain ATCC 35405 / DSM 14222 / CIP 103919 / JCM 8153 / KCTC 15104) protein is Cobalt-precorrin-5B C(1)-methyltransferase.